The following is a 186-amino-acid chain: GTP-dependent dephospho-CoA kinase (186 aa).

6 residues coordinate GTP: aspartate 43, isoleucine 44, valine 45, aspartate 62, glutamate 120, and aspartate 143.

The protein belongs to the GTP-dependent DPCK family.

It carries out the reaction 3'-dephospho-CoA + GTP = GDP + CoA + H(+). It functions in the pathway cofactor biosynthesis; coenzyme A biosynthesis. Catalyzes the GTP-dependent phosphorylation of the 3'-hydroxyl group of dephosphocoenzyme A to form coenzyme A (CoA). This chain is GTP-dependent dephospho-CoA kinase, found in Haloquadratum walsbyi (strain DSM 16790 / HBSQ001).